We begin with the raw amino-acid sequence, 450 residues long: Cysteine protease ATG4C (450 aa).

Cys-112 serves as the catalytic Nucleophile. Active-site residues include Asp-336 and His-338.

It belongs to the peptidase C54 family.

The protein localises to the cytoplasm. It catalyses the reaction [protein]-C-terminal L-amino acid-glycyl-phosphatidylethanolamide + H2O = [protein]-C-terminal L-amino acid-glycine + a 1,2-diacyl-sn-glycero-3-phosphoethanolamine. In terms of biological role, cysteine protease that plays a key role in autophagy by mediating both proteolytic activation and delipidation of ATG8 family proteins. The protease activity is required for proteolytic activation of ATG8 family proteins: cleaves the C-terminal amino acid of ATG8 proteins to reveal a C-terminal glycine. Exposure of the glycine at the C-terminus is essential for ATG8 proteins conjugation to phosphatidylethanolamine (PE) and insertion to membranes, which is necessary for autophagy. In addition to the protease activity, also mediates delipidation of ATG8 family proteins. Catalyzes delipidation of PE-conjugated forms of ATG8 proteins during macroautophagy. The protein is Cysteine protease ATG4C of Xenopus laevis (African clawed frog).